The primary structure comprises 289 residues: Tumor necrosis factor receptor superfamily member 5 (289 aa).

A signal peptide spans 1 to 19 (MVSLPRLCALWGCLLTAVH). Topologically, residues 20 to 193 (LGQCVTCSDK…VICGLKSRMR (174 aa)) are extracellular. TNFR-Cys repeat units follow at residues 25-60 (TCSD…TQCH), 61-103 (PCDS…DTVC), 104-144 (TCKE…TVCH), and 145-187 (PCPV…VICG). Cystine bridges form between cysteine 26-cysteine 37, cysteine 38-cysteine 51, cysteine 41-cysteine 59, cysteine 62-cysteine 77, cysteine 83-cysteine 103, cysteine 105-cysteine 119, cysteine 111-cysteine 116, and cysteine 125-cysteine 143. N-linked (GlcNAc...) asparagine glycosylation is present at asparagine 153. Residues 194-215 (ALLVIPVVMGILITIFGVFLYI) traverse the membrane as a helical segment. At 216-289 (KKVVKKPKDN…TDSIALRPLV (74 aa)) the chain is on the cytoplasmic side. Residues 228–251 (LPPAARRQDPQEMEDYPGHNTAAP) form a disordered region.

In terms of assembly, monomer and homodimer. Interacts with TRAF1, TRAF2 and TRAF6. Interacts with TRAF3 and TRAF5. Interacts with TRAF6 and MAP3K8; the interaction is required for ERK activation.

The protein localises to the cell membrane. Its subcellular location is the secreted. Its function is as follows. Receptor for TNFSF5/CD40LG. Transduces TRAF6- and MAP3K8-mediated signals that activate ERK in macrophages and B cells, leading to induction of immunoglobulin secretion. This is Tumor necrosis factor receptor superfamily member 5 (Cd40) from Mus musculus (Mouse).